The following is a 99-amino-acid chain: Signal recognition particle 19 kDa protein (99 aa).

This sequence belongs to the SRP19 family. As to quaternary structure, part of the signal recognition particle protein translocation system, which is composed of SRP and FtsY. Archaeal SRP consists of a 7S RNA molecule of 300 nucleotides and two protein subunits: SRP54 and SRP19.

The protein resides in the cytoplasm. In terms of biological role, involved in targeting and insertion of nascent membrane proteins into the cytoplasmic membrane. Binds directly to 7S RNA and mediates binding of the 54 kDa subunit of the SRP. This is Signal recognition particle 19 kDa protein from Pyrococcus horikoshii (strain ATCC 700860 / DSM 12428 / JCM 9974 / NBRC 100139 / OT-3).